Consider the following 124-residue polypeptide: MRHYEIVFIVHPDQSEQVPAMIERYKSTITSHGGQIHRIEDWGRRQLAYMIEKLAKAHYVCMNIECDQTTLDELEHAFKFNDAVLRHLIVKMKKAETGPSPMMKEVQREEAKKSAATQPSEAQA.

A disordered region spans residues 96–124; sequence ETGPSPMMKEVQREEAKKSAATQPSEAQA. The segment covering 115–124 has biased composition (polar residues); the sequence is AATQPSEAQA.

This sequence belongs to the bacterial ribosomal protein bS6 family.

Binds together with bS18 to 16S ribosomal RNA. This is Small ribosomal subunit protein bS6 from Paraburkholderia phytofirmans (strain DSM 17436 / LMG 22146 / PsJN) (Burkholderia phytofirmans).